Reading from the N-terminus, the 362-residue chain is PDZ and LIM domain protein 3 (362 aa).

A PDZ domain is found at 1–84; sequence MPQNVVLPGP…QLCLKIDRAE (84 aa). Phosphoserine occurs at positions 18, 92, and 263. A disordered region spans residues 261–282; sequence DGSDDRPAGTRSVRPVTKVHGG. Residues 290 to 349 form the LIM zinc-binding domain; sequence PLCDKCGSGIVGAVVKARDKYRHPECFVCADCNLNLKQKGYFFVEGELYCEMHARARTRP.

In terms of assembly, interacts with ACTN2. Forms a heterodimer with PDLIM4 (via LIM domain). As to expression, highly expressed in skeletal muscle and at low levels in the heart.

The protein resides in the cytoplasm. The protein localises to the myofibril. Its subcellular location is the sarcomere. It is found in the z line. In terms of biological role, may play a role in the organization of actin filament arrays within muscle cells. This Rattus norvegicus (Rat) protein is PDZ and LIM domain protein 3 (Pdlim3).